Here is a 482-residue protein sequence, read N- to C-terminus: Histone deacetylase 1 (482 aa).

The segment at 9-321 (RKVCYYYDGD…WTYETAVALD (313 aa)) is histone deacetylase. Residues glycine 27 and lysine 31 each contribute to the 1D-myo-inositol 1,4,5,6-tetrakisphosphate site. Residue lysine 74 is modified to N6-acetyllysine; alternate. Lysine 74 participates in a covalent cross-link: Glycyl lysine isopeptide (Lys-Gly) (interchain with G-Cter in SUMO2); alternate. The active site involves histidine 141. Zn(2+) is bound by residues aspartate 176 and histidine 178. Lysine 220 is subject to N6-acetyllysine. S-nitrosocysteine is present on cysteine 261. Residue aspartate 264 coordinates Zn(2+). A 1D-myo-inositol 1,4,5,6-tetrakisphosphate-binding site is contributed by arginine 270. Residue cysteine 273 is modified to S-nitrosocysteine. Residues 390–400 (PEESGDEDEED) are compositionally biased toward acidic residues. The interval 390–482 (PEESGDEDEE…KGVKEEVKMA (93 aa)) is disordered. 5 positions are modified to phosphoserine: serine 393, serine 406, serine 409, serine 421, and serine 423. Residues 401 to 416 (PDKRISICSSDKRIAC) show a composition bias toward basic and acidic residues. Residues 417–427 (EEEFSDSDEEG) are compositionally biased toward acidic residues. N6-methylated lysine; by EHMT2 is present on lysine 432. A Glycyl lysine isopeptide (Lys-Gly) (interchain with G-Cter in SUMO2) cross-link involves residue lysine 438. Over residues 443 to 482 (VKTEDEKEKDPEEKKEVTEEEKTKEEKPEAKGVKEEVKMA) the composition is skewed to basic and acidic residues. A Glycyl lysine isopeptide (Lys-Gly) (interchain with G-Cter in SUMO2); alternate cross-link involves residue lysine 444. Residue lysine 444 forms a Glycyl lysine isopeptide (Lys-Gly) (interchain with G-Cter in SUMO); alternate linkage. Residues lysine 456, lysine 457, and lysine 473 each participate in a glycyl lysine isopeptide (Lys-Gly) (interchain with G-Cter in SUMO2) cross-link. Residue lysine 476 forms a Glycyl lysine isopeptide (Lys-Gly) (interchain with G-Cter in SUMO2); alternate linkage. A Glycyl lysine isopeptide (Lys-Gly) (interchain with G-Cter in SUMO); alternate cross-link involves residue lysine 476. Residue lysine 480 forms a Glycyl lysine isopeptide (Lys-Gly) (interchain with G-Cter in SUMO2) linkage.

The protein belongs to the histone deacetylase family. HD type 1 subfamily. As to quaternary structure, part of the core histone deacetylase (HDAC) complex composed of HDAC1, HDAC2, RBBP4 and RBBP7, the core complex associates with SIN3, SAP18 and SAP30 to form the SIN3 HDAC complex. Component of the nucleosome remodeling and deacetylase (NuRD) repressor complex, composed of core proteins MTA1, MTA2, MTA3, RBBP4, RBBP7, HDAC1, HDAC2, MBD2, MBD3, and peripherally associated proteins CDK2AP1, CDK2AP2, GATAD2A, GATAD2B, CHD3, CHD4 and CHD5. The exact stoichiometry of the NuRD complex is unknown, and some subunits such as MBD2 and MBD3, GATAD2A and GATAD2B, and CHD3, CHD4 and CHD5 define mutually exclusive NuRD complexes. Component of a BHC histone deacetylase complex that contains HDAC1, HDAC2, HMG20B/BRAF35, KDM1A, RCOR1/CoREST and PHF21A/BHC80. The BHC complex may also contain ZMYM2, ZNF217, ZMYM3, GSE1 and GTF2I. Component of a mSin3A corepressor complex that contains SIN3A, SAP130, SUDS3/SAP45, ARID4B/SAP180, HDAC1 and HDAC2. Found in a trimeric complex with APBB1 and TSHZ3; the interaction between HDAC1 and APBB1 is mediated by TSHZ3. Forms a complex comprising APPL1, RUVBL2, APPL2, CTNNB1 and HDAC2. Component of a RCOR/GFI/KDM1A/HDAC complex. Part of a complex composed of TRIM28, HDAC1, HDAC2 and EHMT2. Part of a complex containing at least CDYL, MIER1, MIER2, HDAC1 and HDAC2. The large PER complex involved in the histone deacetylation is composed of at least HDAC1, PER2, SFPQ and SIN3A. Associates with the 9-1-1 complex; interacts with HUS1. Found in a complex with DNMT3A and HDAC7. Found in a complex with YY1, SIN3A and GON4L. Identified in a histone deacetylase complex that contains DNTTIP1, HDAC1 and MIDEAS; this complex assembles into a tetramer that contains four copies of each protein chain. Found in a complex composed of at least SINHCAF, SIN3A, HDAC1, SAP30, RBBP4, OGT and TET1. Component of the SIN3B complex, which includes SIN3B, HDAC1, PHF12 and MORF4L1. Interacts with GFI1; the interaction is direct. Interacts directly with GFI1B. Interacts with TSHZ3 (via N-terminus); the interaction is direct. Interacts with APEX1; the interaction is not dependent on the acetylated status of APEX1. Interacts with BANP. Interacts with BAZ2A/TIP5. Interacts with BCL6. Interacts with BCOR. Interacts with BHLHE40/DEC1. Interacts with BRCC3; this interaction is enhanced in the presence of PWWP2B. Interacts with BRMS1. Interacts with BRMS1L. Interacts with C10orf90/FATS (via its N-terminal); the interaction prevents binding of HDAC1 to CDKN1A/p21 and facilitates the acetylation and stabilization of CDKN1A/p21. Interacts with CBFA2T3. Interacts with CCAR2. Interacts with CDK2AP1. Interacts with CHD3. Interacts with CHD4. Interacts with CHFR. Interacts with CIART. Interacts with CDKN1A/p21. Interacts with CDK5 complexed to CDK5R1 (p25). Interacts with CRY1. Interacts with DAXX. Interacts with DDIT3/CHOP. Interacts with DDX5. Interacts with DHX36; this interaction occurs in a RNA-dependent manner. Interacts with DNMT1. Interacts with DNTTIP1. Interacts with E4F1. Interacts with EP300. Interacts with ERCC6. Interacts with GATAD2A. Interacts with HCFC1. Interacts with HDAC9. Interacts with HUS1. Interacts with INSM1. Interacts with KDM4A. Interacts with KDM5A; this interaction impairs histone deacetylation. Interacts with KDM5B. Interacts with KLF1. Interacts with MBD3L2. Interacts with MIER1. Interacts with NFE4. Interacts with NR4A2/NURR1. Interacts with NR1D2 (via C-terminus). Interacts with NRIP1. Interacts with NSD2. Interacts with PACS2. Interacts with PHB2. Interacts with PPHLN1. Interacts with PRDM6. Interacts with PRDM16. Interacts with PWWP2A in a MTA1-dependent manner. Interacts with PWWP2B. Interacts with RB1. Interacts with RERE. Interacts with SANBR (via the BTB domain). Interacts with SAMSN1. Interacts with SAP30L. Interacts with SETDB1. Interacts with SIN3A. Interacts with SMAD3. Interacts with SMAD4; positively regulated by ZBTB7A. Interacts with SMARCAD1. Interacts with SMARCA4/BRG1. Interacts with SMYD2. Interacts with SMYD4 (via MYND-type zinc finger). Interacts with SP1; the interaction deacetylates SP1 and regulates its transcriptional activity. Interacts with SP3; the interaction deacetylates SP3 and regulates its transcriptional activity. In vitro, C(18) ceramides increase this interaction and the subsequent SP3 deacetylation and SP3-mediated repression of the TERT promoter. Interacts with SPEN/MINT. Interacts with SPHK2. Interacts with SUV39H1. Interacts with TGIF. Interacts with TGIF2. Interacts with TRAF6. Interacts with TRIM28; the interaction recruits HDAC1 to E2F1 and inhibits its acetylation. Interacts with TSC22D3 isoform 1; this interaction affects HDAC1 activity on MYOG promoter and thus inhibits MYOD1 transcriptional activity. Interacts with UHRF1. Interacts with UHRF2. Interacts with ZBTB7A. Interacts with ZMYND8. Interacts with ZMYND15. Interacts with ZNF431. Interacts with ZNF516; this interaction is enhanced in the presence of PWWP2B. Interacts with ZNF541. Interacts with ZNF638. Interacts with ZNHIT1. Interacts with the non-histone region of MACROH2A1. Identified in a complex with HDAC2, KCTD19, DNTTIP1 and ZNF541. Interacts with MSX3. Interacts with VRK1. It depends on Zn(2+) as a cofactor. Sumoylated on Lys-444 and Lys-476; which promotes enzymatic activity. Desumoylated by SENP1. In terms of processing, phosphorylation on Ser-421 and Ser-423 promotes enzymatic activity and interactions with NuRD and SIN3 complexes. Phosphorylated by CDK5. Post-translationally, ubiquitinated by CHFR and KCTD11, leading to its degradation by the proteasome.

The protein resides in the nucleus. It catalyses the reaction N(6)-acetyl-L-lysyl-[histone] + H2O = L-lysyl-[histone] + acetate. The catalysed reaction is N(6)-acetyl-L-lysyl-[protein] + H2O = L-lysyl-[protein] + acetate. The enzyme catalyses N(6)-(2E)-butenoyl-L-lysyl-[protein] + H2O = (2E)-2-butenoate + L-lysyl-[protein]. It carries out the reaction N(6)-[(S)-lactoyl]-L-lysyl-[protein] + H2O = (S)-lactate + L-lysyl-[protein]. Inositol tetraphosphate (1D-myo-inositol 1,4,5,6-tetrakisphosphate) may act as an intermolecular glue between HDAC1 and N-Cor repressor complex components. Its function is as follows. Histone deacetylase that catalyzes the deacetylation of lysine residues on the N-terminal part of the core histones (H2A, H2B, H3 and H4). Histone deacetylation gives a tag for epigenetic repression and plays an important role in transcriptional regulation, cell cycle progression and developmental events. Histone deacetylases act via the formation of large multiprotein complexes. Acts as a component of the histone deacetylase NuRD complex which participates in the remodeling of chromatin. As part of the SIN3B complex is recruited downstream of the constitutively active genes transcriptional start sites through interaction with histones and mitigates histone acetylation and RNA polymerase II progression within transcribed regions contributing to the regulation of transcription. Also functions as a deacetylase for non-histone targets, such as NR1D2, RELA, SP1, SP3, STAT3 and TSHZ3. Deacetylates SP proteins, SP1 and SP3, and regulates their function. Component of the BRG1-RB1-HDAC1 complex, which negatively regulates the CREST-mediated transcription in resting neurons. Upon calcium stimulation, HDAC1 is released from the complex and CREBBP is recruited, which facilitates transcriptional activation. Deacetylates TSHZ3 and regulates its transcriptional repressor activity. Deacetylates 'Lys-310' in RELA and thereby inhibits the transcriptional activity of NF-kappa-B. Deacetylates NR1D2 and abrogates the effect of KAT5-mediated relieving of NR1D2 transcription repression activity. Component of a RCOR/GFI/KDM1A/HDAC complex that suppresses, via histone deacetylase (HDAC) recruitment, a number of genes implicated in multilineage blood cell development. Involved in CIART-mediated transcriptional repression of the circadian transcriptional activator: CLOCK-BMAL1 heterodimer. Required for the transcriptional repression of circadian target genes, such as PER1, mediated by the large PER complex or CRY1 through histone deacetylation. In addition to protein deacetylase activity, also has protein-lysine deacylase activity: acts as a protein decrotonylase and delactylase by mediating decrotonylation ((2E)-butenoyl) and delactylation (lactoyl) of histones, respectively. In Rattus norvegicus (Rat), this protein is Histone deacetylase 1 (Hdac1).